Here is a 491-residue protein sequence, read N- to C-terminus: Polybrominated aromatic compounds synthase (491 aa).

Residue C437 participates in heme binding.

It belongs to the cytochrome P450 family. Heme is required as a cofactor.

Its function is as follows. Cytochrome P450 protein involved in the biosynthesis of polybrominated aromatic organic compounds. In the presence of ferredoxin, ferredoxin reductase and NADH, catalyzes the coupling of bromophenols and bromopyrroles, forming various polybrominated biphenyls and hydroxylated polybrominated diphenyl ethers (OH-BDE). Can also mediate the heterocoupling of 3,5-dibromocatechol. Can also use chlorinated phenolic substrates. 2,3,4-tribromopyrrole could be the physiological substrate. The sequence is that of Polybrominated aromatic compounds synthase from Pseudoalteromonas luteoviolacea (strain 2ta16).